The following is a 158-amino-acid chain: Cyclic pyranopterin monophosphate synthase (158 aa).

Substrate-binding positions include 75-77 (LCH) and 113-114 (ME). D128 is a catalytic residue.

Belongs to the MoaC family. As to quaternary structure, homohexamer; trimer of dimers.

The catalysed reaction is (8S)-3',8-cyclo-7,8-dihydroguanosine 5'-triphosphate = cyclic pyranopterin phosphate + diphosphate. The protein operates within cofactor biosynthesis; molybdopterin biosynthesis. Functionally, catalyzes the conversion of (8S)-3',8-cyclo-7,8-dihydroguanosine 5'-triphosphate to cyclic pyranopterin monophosphate (cPMP). The chain is Cyclic pyranopterin monophosphate synthase from Histophilus somni (strain 129Pt) (Haemophilus somnus).